A 356-amino-acid polypeptide reads, in one-letter code: Probable neutral protease 2 homolog ARB_04769 (356 aa).

The signal sequence occupies residues 1-17 (MQFTALLAALGAPLALA). Residues 18–183 (ASIPAAAHNH…DDSTGVIDKR (166 aa)) constitute a propeptide that is removed on maturation. 2 cysteine pairs are disulfide-bonded: Cys191–Cys262 and Cys269–Cys287. Asn205 carries N-linked (GlcNAc...) asparagine glycosylation. His311 contacts Zn(2+). Residue Glu312 is part of the active site. Zn(2+) is bound by residues His315 and Asp326.

This sequence belongs to the peptidase M35 family. The cofactor is Zn(2+).

The protein resides in the secreted. It catalyses the reaction Preferential cleavage of bonds with hydrophobic residues in P1'. Also 3-Asn-|-Gln-4 and 8-Gly-|-Ser-9 bonds in insulin B chain.. Its function is as follows. Probable secreted metalloprotease that shows high activities on basic nuclear substrates such as histone and protamine. May be involved in virulence. This chain is Probable neutral protease 2 homolog ARB_04769, found in Arthroderma benhamiae (strain ATCC MYA-4681 / CBS 112371) (Trichophyton mentagrophytes).